Consider the following 892-residue polypeptide: Protein BNI4 (892 aa).

A phosphoserine mark is found at serine 43 and serine 133. Disordered regions lie at residues 185-287 and 305-387; these read DFLS…EDTS and KPVI…QDTE. Positions 208–223 are enriched in basic and acidic residues; the sequence is TILERDNNLPVKREEN. Composition is skewed to polar residues over residues 224–236 and 270–280; these read TIIN…TTHS and DSSAQRTTSAG. Serine 281 bears the Phosphoserine mark. Polar residues predominate over residues 309–335; sequence GNNSVTNEKNKMSSSSTFSMNIQTSLK. The span at 346–356 shows a compositional bias: low complexity; the sequence is SSSSIFNSFLK. Over residues 357–371 the composition is skewed to basic and acidic residues; that stretch reads GKIETSDSPRKEPMR. Residues serine 364 and serine 394 each carry the phosphoserine modification. Threonine 410 bears the Phosphothreonine mark. Residues serine 476, serine 500, and serine 503 each carry the phosphoserine modification. Disordered stretches follow at residues 506 to 526, 618 to 644, and 685 to 734; these read RTRS…RSLT, SDEE…SERQ, and YATE…GDER. Serine 618 is subject to Phosphoserine. Basic and acidic residues predominate over residues 624–643; the sequence is EVERDVPKPREEPLKKDSER. Threonine 703 is modified (phosphothreonine). A compositionally biased stretch (basic and acidic residues) spans 707–719; sequence RNNKEDSYKERET. Residues serine 746 and serine 825 each carry the phosphoserine modification.

In terms of assembly, may interact with CHS3 and seems to be an adapter (along with SKT5) to link CHS3 to septins.

This chain is Protein BNI4 (BNI4), found in Saccharomyces cerevisiae (strain ATCC 204508 / S288c) (Baker's yeast).